We begin with the raw amino-acid sequence, 62 residues long: Photosystem II reaction center protein Z (62 aa).

2 helical membrane-spanning segments follow: residues 8–28 (TMFA…ITFA) and 41–61 (FSGV…NSFI).

Belongs to the PsbZ family. In terms of assembly, PSII is composed of 1 copy each of membrane proteins PsbA, PsbB, PsbC, PsbD, PsbE, PsbF, PsbH, PsbI, PsbJ, PsbK, PsbL, PsbM, PsbT, PsbY, PsbZ, Psb30/Ycf12, at least 3 peripheral proteins of the oxygen-evolving complex and a large number of cofactors. It forms dimeric complexes.

The protein resides in the plastid. It is found in the chloroplast thylakoid membrane. Its function is as follows. May control the interaction of photosystem II (PSII) cores with the light-harvesting antenna, regulates electron flow through the 2 photosystem reaction centers. PSII is a light-driven water plastoquinone oxidoreductase, using light energy to abstract electrons from H(2)O, generating a proton gradient subsequently used for ATP formation. The protein is Photosystem II reaction center protein Z of Welwitschia mirabilis (Tree tumbo).